The primary structure comprises 170 residues: Bifunctional protein PyrR (170 aa).

Positions Leu90–Thr102 match the PRPP-binding motif.

Belongs to the purine/pyrimidine phosphoribosyltransferase family. PyrR subfamily.

It carries out the reaction UMP + diphosphate = 5-phospho-alpha-D-ribose 1-diphosphate + uracil. Its function is as follows. Regulates the transcription of the pyrimidine nucleotide (pyr) operon in response to exogenous pyrimidines. Also displays a weak uracil phosphoribosyltransferase activity which is not physiologically significant. The protein is Bifunctional protein PyrR of Pseudomonas syringae pv. tomato (strain ATCC BAA-871 / DC3000).